The sequence spans 80 residues: U1-nemetoxin-Csp1a (80 aa).

A signal peptide spans 1 to 20 (MKYFVVFCVLIIAVAAFTSA). Positions 21–41 (AEDGEVFEENPLEFPKTIQKR) are excised as a propeptide. 4 cysteine pairs are disulfide-bonded: cysteine 42–cysteine 56, cysteine 49–cysteine 60, cysteine 55–cysteine 77, and cysteine 66–cysteine 73.

This sequence belongs to the neurotoxin 13 (insecticidal toxin ABC) family. 02 (Calisoga) subfamily. In terms of tissue distribution, expressed by the venom gland.

The protein resides in the secreted. Functionally, causes paralysis to insect larvae (H.virescens). This toxin is active only on insects. This Calisoga sp. (Spider) protein is U1-nemetoxin-Csp1a.